Reading from the N-terminus, the 400-residue chain is Chalcone synthase 7 (400 aa).

Residue Cys168 is part of the active site.

The protein belongs to the thiolase-like superfamily. Chalcone/stilbene synthases family.

It carries out the reaction (E)-4-coumaroyl-CoA + 3 malonyl-CoA + 3 H(+) = 2',4,4',6'-tetrahydroxychalcone + 3 CO2 + 4 CoA. The protein operates within secondary metabolite biosynthesis; flavonoid biosynthesis. Functionally, the primary product of this enzyme is 4,2',4',6'-tetrahydroxychalcone (also termed naringenin-chalcone or chalcone) which can under specific conditions spontaneously isomerize into naringenin. The protein is Chalcone synthase 7 (CHS7) of Sorghum bicolor (Sorghum).